The following is a 202-amino-acid chain: FMN-dependent NADH:quinone oxidoreductase (202 aa).

FMN-binding positions include S10 and M95–F98.

Belongs to the azoreductase type 1 family. Homodimer. It depends on FMN as a cofactor.

The enzyme catalyses 2 a quinone + NADH + H(+) = 2 a 1,4-benzosemiquinone + NAD(+). It catalyses the reaction N,N-dimethyl-1,4-phenylenediamine + anthranilate + 2 NAD(+) = 2-(4-dimethylaminophenyl)diazenylbenzoate + 2 NADH + 2 H(+). Functionally, quinone reductase that provides resistance to thiol-specific stress caused by electrophilic quinones. Also exhibits azoreductase activity. Catalyzes the reductive cleavage of the azo bond in aromatic azo compounds to the corresponding amines. The chain is FMN-dependent NADH:quinone oxidoreductase from Pseudoalteromonas atlantica (strain T6c / ATCC BAA-1087).